The primary structure comprises 336 residues: Phospho-N-acetylmuramoyl-pentapeptide-transferase (336 aa).

10 helical membrane-spanning segments follow: residues 3 to 23, 52 to 72, 79 to 99, 123 to 143, 144 to 164, 175 to 195, 201 to 221, 227 to 247, 255 to 275, and 315 to 335; these read LSIM…PRFI, MGGT…SIIL, NLGA…IGFL, LIAG…SAIN, IFGF…FWVV, GIDG…GIIA, FDIL…FVFN, VFMG…ISIA, LFIG…VAYF, and VDAF…AILY.

This sequence belongs to the glycosyltransferase 4 family. MraY subfamily. It depends on Mg(2+) as a cofactor.

The protein resides in the cell membrane. The catalysed reaction is UDP-N-acetyl-alpha-D-muramoyl-L-alanyl-gamma-D-glutamyl-L-lysyl-D-alanyl-D-alanine + di-trans,octa-cis-undecaprenyl phosphate = Mur2Ac(oyl-L-Ala-gamma-D-Glu-L-Lys-D-Ala-D-Ala)-di-trans,octa-cis-undecaprenyl diphosphate + UMP. The protein operates within cell wall biogenesis; peptidoglycan biosynthesis. Functionally, catalyzes the initial step of the lipid cycle reactions in the biosynthesis of the cell wall peptidoglycan: transfers peptidoglycan precursor phospho-MurNAc-pentapeptide from UDP-MurNAc-pentapeptide onto the lipid carrier undecaprenyl phosphate, yielding undecaprenyl-pyrophosphoryl-MurNAc-pentapeptide, known as lipid I. The chain is Phospho-N-acetylmuramoyl-pentapeptide-transferase from Streptococcus agalactiae serotype Ia (strain ATCC 27591 / A909 / CDC SS700).